We begin with the raw amino-acid sequence, 447 residues long: Tubulin beta chain (447 aa).

Gln11, Glu69, Ser138, Gly142, Thr143, Gly144, Asn204, and Asn226 together coordinate GTP. Glu69 contributes to the Mg(2+) binding site. Residues 424–447 are disordered; the sequence is QYQDASISEGEEDYEEEPQVENEE. The span at 432-447 shows a compositional bias: acidic residues; the sequence is EGEEDYEEEPQVENEE.

The protein belongs to the tubulin family. As to quaternary structure, dimer of alpha and beta chains. A typical microtubule is a hollow water-filled tube with an outer diameter of 25 nm and an inner diameter of 15 nM. Alpha-beta heterodimers associate head-to-tail to form protofilaments running lengthwise along the microtubule wall with the beta-tubulin subunit facing the microtubule plus end conferring a structural polarity. Microtubules usually have 13 protofilaments but different protofilament numbers can be found in some organisms and specialized cells. Mg(2+) is required as a cofactor.

It is found in the cytoplasm. The protein localises to the cytoskeleton. Tubulin is the major constituent of microtubules, a cylinder consisting of laterally associated linear protofilaments composed of alpha- and beta-tubulin heterodimers. Microtubules grow by the addition of GTP-tubulin dimers to the microtubule end, where a stabilizing cap forms. Below the cap, tubulin dimers are in GDP-bound state, owing to GTPase activity of alpha-tubulin. This chain is Tubulin beta chain, found in Uncinula necator (Grape powdery mildew).